The chain runs to 1227 residues: DNA-directed RNA polymerase subunit beta (1227 aa).

Belongs to the RNA polymerase beta chain family. As to quaternary structure, the RNAP catalytic core consists of 2 alpha, 1 beta, 1 beta' and 1 omega subunit. When a sigma factor is associated with the core the holoenzyme is formed, which can initiate transcription.

It carries out the reaction RNA(n) + a ribonucleoside 5'-triphosphate = RNA(n+1) + diphosphate. DNA-dependent RNA polymerase catalyzes the transcription of DNA into RNA using the four ribonucleoside triphosphates as substrates. This is DNA-directed RNA polymerase subunit beta from Chloroflexus aggregans (strain MD-66 / DSM 9485).